Consider the following 192-residue polypeptide: Probable nicotinate-nucleotide adenylyltransferase (192 aa).

The protein belongs to the NadD family.

It carries out the reaction nicotinate beta-D-ribonucleotide + ATP + H(+) = deamido-NAD(+) + diphosphate. It functions in the pathway cofactor biosynthesis; NAD(+) biosynthesis; deamido-NAD(+) from nicotinate D-ribonucleotide: step 1/1. Its function is as follows. Catalyzes the reversible adenylation of nicotinate mononucleotide (NaMN) to nicotinic acid adenine dinucleotide (NaAD). The polypeptide is Probable nicotinate-nucleotide adenylyltransferase (Cytophaga hutchinsonii (strain ATCC 33406 / DSM 1761 / CIP 103989 / NBRC 15051 / NCIMB 9469 / D465)).